A 121-amino-acid polypeptide reads, in one-letter code: uncharacterized protein (121 aa).

Disordered stretches follow at residues 24–43 (SGRTGGQRKGASLARPGRGG) and 100–121 (DHENSQNNSKRRCKVNCETDQR).

This is an uncharacterized protein from Homo sapiens (Human).